A 429-amino-acid polypeptide reads, in one-letter code: Acetyltransferase pyr8 (429 aa).

9 helical membrane passes run 12 to 32 (IAQE…VIIT), 39 to 56 (LRLA…RFSL), 69 to 89 (GVAA…LLIT), 154 to 174 (YVLR…LIHM), 221 to 241 (VCLN…RISA), 300 to 320 (IFFT…ILGI), 324 to 344 (GSGA…EDGV), 365 to 385 (LVGF…YLYP), and 409 to 429 (VAQK…GGEI).

The protein belongs to the wax synthase family.

It localises to the membrane. The protein operates within secondary metabolite biosynthesis; terpenoid biosynthesis. Functionally, acetyltransferase; part of the gene cluster that mediates the biosynthesis of pyripyropene A, a specific human acyl-coenzyme A:cholesterol acyltransferase 2 inhibitor. The first step of the pathway is the synthesis of nicotinyl-CoA from nicotinic acid by the nicotinic acid-CoA ligase pyr1. Nicotinyl-CoA is then a substrate of polyketide synthase pyr2 to produce 4-hydroxy-6-(3-pyridinyl)-2H-pyran-2-one (HPPO) which is further prenylated by the polyprenyl transferase pyr6 to yield farnesyl-HPPO. The next steps consist of an epoxidation of farnesyl-HPPO to epoxyfarnesyl-HPPO by FAD-dependent monooxygenase pyr5 and a cyclization of the terpenoid portion by the terpene cyclase pyr4 to yield deacetyl-pyripyropene E. The 2 cytochrome P450 monooxygenases pyr3 and pyr9, and the 2 acetyltransferases pyr7 and pyr8 are involved in the conversion of deacetyl-pyripyropene E into pyripyropene A through several cycles of oxidation and acetylation steps. Pyr7 acetylates deacetyl-pyripyropene E to pyripyropene E which is oxidized to 11-deacetyl-pyripyropene O by pyr3, which is in turn acetylated into pyripyropene O by pyr8. Pyripyropene O is then oxidized to deacetyl-pyripyropene A by pyr9. Deacetyl-pyripyropene A is finally acetylated to pyripyropene A by pyr8. The polypeptide is Acetyltransferase pyr8 (Aspergillus fumigatus (strain ATCC MYA-4609 / CBS 101355 / FGSC A1100 / Af293) (Neosartorya fumigata)).